Consider the following 1108-residue polypeptide: MERATQPRPRALLLLFLLLGCAAGISAVARARSLLAPTSDTAFGLGAAAAPTSAARVPAVATAEVTVEDAEALPAASGEQESRATESDDDVELRPRGRSLVIISTLDGRIAALDAENHGKKQWDLDVGSGSLVSSSLSKPEVFGNKMIIPSLDGDLFQWDRDRESMEAVPFTVESLLESSYKFGDDVVLVGGKSLTTYGLSAYSGKLRYICSALGCRRWDSDEMEEEEDILLLQRTQKTVRAVGPRSGSEKWNFSVGHFELRYIPDMETRAGFIESTFKLGGNKEDSKIISDVEEQDVDTVIKVSVADWKVMAFSKKGGRLEWEYQFCTPIASAWLVRDGKVIPISLFDDTSYTANEEVLEDEEDIVEAARGATENSVYLGMYRGQLYLQSSVRVSEKFPTRPKALESVNGESAIIPLPTIKWKPLIHSPSRTPVLVGSDEFDKCLSNDKYSHEEYSNGALSILQYPYDNGYYLPYYKRERNKRSTQITVRFLDSPHYSKNIRKKDPILLLHWWKEIFGTILLCIVATTFIVRRLFHPQPHRQRKESETQCQTESKYDSVSADNSDNSWNDIKHSGYVSRYLTDFEPIQCMGRGGFGVVFEAKNKVDDCNYAIKRIRLPNRELAREKVMREVKALAKLEHPGIVRYFNAWLETPPEKWQEEMDEIWLKDESTDWPLSSPSPMDAPSVKIRQMDPFSTKEQIEVIAPSPERSRSFSVGISCGRTSSSESQFSPLEFSGTDCGDNSDSEDAAHNLQDSCLTDCDMEDGTVDGDDEGHSFELCPSEASPYTRSREGTSSSIVFEDSGCDNASSKEDPRMNRLHNGHHYVNKLTEFKHSSSRSSSEATLSTSPTRPTTLSLDFTRNTVDRLQPSSPKVYLYIQMQLCRKENLKDWMNRRCSMEDREHRVCLHIFLQIAEAVQFLHSKGLMHRDLKPSNIFFTMDDVVKVGDFGLVTAMDQDEEEQTVLTPMPAYATHTGQVGTKLYMSPEQIHGNNYSHKVDIFSLGLILFELLYPFSTQMERVRTLTDVRNLKFPPLFTQKYPQEHMMVQDMLSPSPMERPEATDIIENAVFENLEFPGKTVLRQRSRSLSSSGTKHSRQPSSTFSPLPGN.

Positions 1–27 (MERATQPRPRALLLLFLLLGCAAGISA) are cleaved as a signal peptide. Residues 28–506 (VARARSLLAP…HYSKNIRKKD (479 aa)) lie on the Lumenal side of the membrane. The interval 71 to 92 (EALPAASGEQESRATESDDDVE) is disordered. Asn-253 carries N-linked (GlcNAc...) asparagine glycosylation. The helical transmembrane segment at 507–527 (PILLLHWWKEIFGTILLCIVA) threads the bilayer. Over 528-1108 (TTFIVRRLFH…SSTFSPLPGN (581 aa)) the chain is Cytoplasmic. The tract at residues 542-563 (RQRKESETQCQTESKYDSVSAD) is disordered. The Protein kinase domain maps to 585–1069 (FEPIQCMGRG…ATDIIENAVF (485 aa)). ATP is bound at residue 591-599 (MGRGGFGVV). At Tyr-611 the chain carries Phosphotyrosine; by autocatalysis. Lys-614 contacts ATP. The interval 639–880 (EHPGIVRYFN…SPKVYLYIQM (242 aa)) is insert loop. Ser-707 carries the post-translational modification Phosphoserine. Disordered stretches follow at residues 772–818 (DEGH…RMNR) and 832–856 (FKHSSSRSSSEATLSTSPTRPTTLS). Positions 785–798 (SPYTRSREGTSSSI) are enriched in polar residues. Thr-794 bears the Phosphothreonine mark. Over residues 837 to 856 (SRSSSEATLSTSPTRPTTLS) the composition is skewed to low complexity. Asp-929 serves as the catalytic Proton acceptor. Thr-974 is subject to Phosphothreonine. The interval 1080–1108 (LRQRSRSLSSSGTKHSRQPSSTFSPLPGN) is disordered. At Ser-1086 the chain carries Phosphoserine. Over residues 1097 to 1108 (QPSSTFSPLPGN) the composition is skewed to polar residues.

The protein belongs to the protein kinase superfamily. Ser/Thr protein kinase family. GCN2 subfamily. Forms dimers with HSPA5/BIP in resting cells. Homotetramerizes in response to endoplasmic reticulum (ER) stress, leading to its activation. Interacts with HSP90B1/GRP94. Interacts with DNAJC3; inhibiting EIF2AK3/PERK activity. Interacts with ATAD3A; ATAD3A and EIF2S1/eIF-2-alpha occupy a common binding site within the cytoplasmic loop of EIF2AK3/PERK, leading to prevent EIF2AK3/PERK association with its substrate EIF2S1/eIF-2-alpha. Interacts with MFN2. Interacts with TMEM33. Interacts with PDIA6. Interacts with LACC1. In terms of processing, oligomerization of the N-terminal ER luminal domain by ER stress promotes EIF2AK3/PERK trans-autophosphorylation of the C-terminal cytoplasmic kinase domain at multiple residues including Thr-974 on the kinase activation loop. Autophosphorylated at Tyr-611 following endoplasmic reticulum stress, leading to activate its activity. Dephosphorylated at Tyr-611 by PTPN1/PTP1B, leading to inactivate its enzyme activity. Phosphorylation at Thr-794 by AKT (AKT1, AKT2 and/or AKT3) inactivates EIF2AK3/PERK. Post-translationally, ADP-ribosylated by PARP16 upon ER stress, which increases kinase activity. In terms of tissue distribution, ubiquitous.

It is found in the endoplasmic reticulum membrane. The catalysed reaction is L-seryl-[protein] + ATP = O-phospho-L-seryl-[protein] + ADP + H(+). It carries out the reaction L-threonyl-[protein] + ATP = O-phospho-L-threonyl-[protein] + ADP + H(+). It catalyses the reaction L-tyrosyl-[protein] + ATP = O-phospho-L-tyrosyl-[protein] + ADP + H(+). Its activity is regulated as follows. Inhibited by HSPA5/BIP in absence of stress. Perturbation in protein folding in the endoplasmic reticulum (ER) promotes reversible dissociation from HSPA5/BIP and oligomerization, resulting in trans-autophosphorylation and kinase activity induction. Inactivated following phosphorylation at Thr-794 by AKT (AKT1, AKT2 and/or AKT3). Inhibited by ATAD3A at mitochondria-endoplasmic reticulum contact sites, providing a safe haven for mitochondrial protein translation during ER stress. Metabolic-stress sensing protein kinase that phosphorylates the alpha subunit of eukaryotic translation initiation factor 2 (EIF2S1/eIF-2-alpha) in response to various stress, such as unfolded protein response (UPR). Key effector of the integrated stress response (ISR) to unfolded proteins: EIF2AK3/PERK specifically recognizes and binds misfolded proteins, leading to its activation and EIF2S1/eIF-2-alpha phosphorylation. EIF2S1/eIF-2-alpha phosphorylation in response to stress converts EIF2S1/eIF-2-alpha in a global protein synthesis inhibitor, leading to a global attenuation of cap-dependent translation, while concomitantly initiating the preferential translation of ISR-specific mRNAs, such as the transcriptional activators ATF4 and QRICH1, and hence allowing ATF4- and QRICH1-mediated reprogramming. The EIF2AK3/PERK-mediated unfolded protein response increases mitochondrial oxidative phosphorylation by promoting ATF4-mediated expression of COX7A2L/SCAF1, thereby increasing formation of respiratory chain supercomplexes. In contrast to most subcellular compartments, mitochondria are protected from the EIF2AK3/PERK-mediated unfolded protein response due to EIF2AK3/PERK inhibition by ATAD3A at mitochondria-endoplasmic reticulum contact sites. In addition to EIF2S1/eIF-2-alpha, also phosphorylates NFE2L2/NRF2 in response to stress, promoting release of NFE2L2/NRF2 from the BCR(KEAP1) complex, leading to nuclear accumulation and activation of NFE2L2/NRF2. Serves as a critical effector of unfolded protein response (UPR)-induced G1 growth arrest due to the loss of cyclin-D1 (CCND1). Involved in control of mitochondrial morphology and function. This Rattus norvegicus (Rat) protein is Eukaryotic translation initiation factor 2-alpha kinase 3 (Eif2ak3).